The following is a 537-amino-acid chain: RNA polymerase sigma-54 factor 2 (537 aa).

Residues 52 to 90 (ANDEASGGEAPAEAGQFSDSDGGHNDEPGGGPGEAFEPG) form a disordered region. Positions 55–66 (EASGGEAPAEAG) are enriched in low complexity. Residues 403–422 (NLKAVADAIQMHESTVSRVT) constitute a DNA-binding region (H-T-H motif). Positions 492-500 (ARRTVAKYR) match the RPON box motif. Residues 507 to 537 (SSVQRRRDKQSALGNVLSTAMSDRSRNPEPA) form a disordered region. Residues 518 to 528 (ALGNVLSTAMS) are compositionally biased toward polar residues.

The protein belongs to the sigma-54 factor family.

Sigma factors are initiation factors that promote the attachment of RNA polymerase to specific initiation sites and are then released. This sigma factor is responsible for the expression of the nitrogen fixation genes. This chain is RNA polymerase sigma-54 factor 2 (rpoN2), found in Bradyrhizobium diazoefficiens (strain JCM 10833 / BCRC 13528 / IAM 13628 / NBRC 14792 / USDA 110).